A 143-amino-acid polypeptide reads, in one-letter code: Ribosomal RNA large subunit methyltransferase H (143 aa).

S-adenosyl-L-methionine contacts are provided by residues G95 and 111 to 116 (FSDLTF).

It belongs to the RNA methyltransferase RlmH family. As to quaternary structure, homodimer.

The protein localises to the cytoplasm. The enzyme catalyses pseudouridine(1915) in 23S rRNA + S-adenosyl-L-methionine = N(3)-methylpseudouridine(1915) in 23S rRNA + S-adenosyl-L-homocysteine + H(+). Specifically methylates the pseudouridine at position 1915 (m3Psi1915) in 23S rRNA. The chain is Ribosomal RNA large subunit methyltransferase H from Metamycoplasma arthritidis (strain 158L3-1) (Mycoplasma arthritidis).